An 847-amino-acid chain; its full sequence is DNA mismatch repair protein MutS (847 aa).

Gly603–Ser610 lines the ATP pocket.

It belongs to the DNA mismatch repair MutS family.

In terms of biological role, this protein is involved in the repair of mismatches in DNA. It is possible that it carries out the mismatch recognition step. This protein has a weak ATPase activity. The polypeptide is DNA mismatch repair protein MutS (Streptococcus suis (strain 98HAH33)).